A 107-amino-acid chain; its full sequence is DNA-directed RNA polymerase subunit omega (107 aa).

Residues 81 to 107 (MEEEAAKGNADAGQGEGDAPKTPGQDG) form a disordered region.

Belongs to the RNA polymerase subunit omega family. The RNAP catalytic core consists of 2 alpha, 1 beta, 1 beta' and 1 omega subunit. When a sigma factor is associated with the core the holoenzyme is formed, which can initiate transcription.

The catalysed reaction is RNA(n) + a ribonucleoside 5'-triphosphate = RNA(n+1) + diphosphate. In terms of biological role, promotes RNA polymerase assembly. Latches the N- and C-terminal regions of the beta' subunit thereby facilitating its interaction with the beta and alpha subunits. The sequence is that of DNA-directed RNA polymerase subunit omega from Alkalilimnicola ehrlichii (strain ATCC BAA-1101 / DSM 17681 / MLHE-1).